Consider the following 197-residue polypeptide: HTH-type transcriptional regulator BetI (197 aa).

In terms of domain architecture, HTH tetR-type spans 8-68; that stretch reads PIRRQQLIEA…ATMRYLMSVL (61 aa). A DNA-binding region (H-T-H motif) is located at residues 31–50; that stretch reads SIALIARLAGVSNGIISHYF.

It functions in the pathway amine and polyamine biosynthesis; betaine biosynthesis via choline pathway [regulation]. Functionally, repressor involved in the biosynthesis of the osmoprotectant glycine betaine. It represses transcription of the choline transporter BetT and the genes of BetAB involved in the synthesis of glycine betaine. The sequence is that of HTH-type transcriptional regulator BetI from Pseudomonas fluorescens (strain Pf0-1).